Consider the following 276-residue polypeptide: NAD-capped RNA hydrolase NudC (276 aa).

Arginine 82 contributes to the substrate binding site. Zn(2+) contacts are provided by cysteine 112 and cysteine 115. Glutamate 125 is a substrate binding site. Residues cysteine 130 and cysteine 133 each contribute to the Zn(2+) site. Residue tyrosine 138 coordinates substrate. The 124-residue stretch at 139–262 (PRISPSMIVL…SIARYLIDLY (124 aa)) folds into the Nudix hydrolase domain. 3 residues coordinate a divalent metal cation: alanine 172, glutamate 188, and glutamate 192. Residues 173–194 (GFAEPGESAEDCLVREVREEVA) carry the Nudix box motif. 206 to 213 (QCWPFPHS) is a substrate binding site. Glutamate 233 serves as a coordination point for a divalent metal cation. Residue alanine 255 participates in substrate binding.

It belongs to the Nudix hydrolase family. NudC subfamily. Homodimer. Requires Mg(2+) as cofactor. Mn(2+) serves as cofactor. The cofactor is Zn(2+).

The enzyme catalyses a 5'-end NAD(+)-phospho-ribonucleoside in mRNA + H2O = a 5'-end phospho-adenosine-phospho-ribonucleoside in mRNA + beta-nicotinamide D-ribonucleotide + 2 H(+). The catalysed reaction is NAD(+) + H2O = beta-nicotinamide D-ribonucleotide + AMP + 2 H(+). It carries out the reaction NADH + H2O = reduced beta-nicotinamide D-ribonucleotide + AMP + 2 H(+). In terms of biological role, mRNA decapping enzyme that specifically removes the nicotinamide adenine dinucleotide (NAD) cap from a subset of mRNAs by hydrolyzing the diphosphate linkage to produce nicotinamide mononucleotide (NMN) and 5' monophosphate mRNA. The NAD-cap is present at the 5'-end of some mRNAs and stabilizes RNA against 5'-processing. Has preference for mRNAs with a 5'-end purine. Catalyzes the hydrolysis of a broad range of dinucleotide pyrophosphates. The chain is NAD-capped RNA hydrolase NudC from Pseudomonas putida (strain W619).